The primary structure comprises 511 residues: Bifunctional purine biosynthesis protein PurH (511 aa).

One can recognise an MGS-like domain in the interval 1–145 (MKKRALVSVS…KNHKFVSVIV (145 aa)).

This sequence belongs to the PurH family.

The catalysed reaction is (6R)-10-formyltetrahydrofolate + 5-amino-1-(5-phospho-beta-D-ribosyl)imidazole-4-carboxamide = 5-formamido-1-(5-phospho-D-ribosyl)imidazole-4-carboxamide + (6S)-5,6,7,8-tetrahydrofolate. It carries out the reaction IMP + H2O = 5-formamido-1-(5-phospho-D-ribosyl)imidazole-4-carboxamide. It functions in the pathway purine metabolism; IMP biosynthesis via de novo pathway; 5-formamido-1-(5-phospho-D-ribosyl)imidazole-4-carboxamide from 5-amino-1-(5-phospho-D-ribosyl)imidazole-4-carboxamide (10-formyl THF route): step 1/1. The protein operates within purine metabolism; IMP biosynthesis via de novo pathway; IMP from 5-formamido-1-(5-phospho-D-ribosyl)imidazole-4-carboxamide: step 1/1. The chain is Bifunctional purine biosynthesis protein PurH from Bacillus cereus (strain B4264).